The chain runs to 109 residues: Large ribosomal subunit protein uL22 (109 aa).

A compositionally biased stretch (basic residues) spans 84–95; that stretch reads ARGTASRIRKPT. A disordered region spans residues 84 to 109; it reads ARGTASRIRKPTSHIMVEVSKPSKEA.

Belongs to the universal ribosomal protein uL22 family. As to quaternary structure, part of the 50S ribosomal subunit.

In terms of biological role, this protein binds specifically to 23S rRNA; its binding is stimulated by other ribosomal proteins, e.g. L4, L17, and L20. It is important during the early stages of 50S assembly. It makes multiple contacts with different domains of the 23S rRNA in the assembled 50S subunit and ribosome. Functionally, the globular domain of the protein is located near the polypeptide exit tunnel on the outside of the subunit, while an extended beta-hairpin is found that lines the wall of the exit tunnel in the center of the 70S ribosome. The protein is Large ribosomal subunit protein uL22 of Campylobacter hominis (strain ATCC BAA-381 / DSM 21671 / CCUG 45161 / LMG 19568 / NCTC 13146 / CH001A).